The sequence spans 215 residues: MAGEKFQKKGKEKWKEKVWYTVEAPPYLGSKEVSVALGEDSNSMVNRVVEVPISELTGNFKKSNEKALFRITNCEGTKCKTIFIGHYIGDDYIRRLVRRRKERIDIIEDVKTSDNSIITVKIVVVTDGKVTNTKKFQIRKVLTDFILNKGLSLPYSEFVRYLIGDDIYNDMISATKDIYPLKKIEVRKSELVSLSGISEIHAGSQNSGEEPVVQN.

This sequence belongs to the eukaryotic ribosomal protein eS1 family.

This Thermoplasma volcanium (strain ATCC 51530 / DSM 4299 / JCM 9571 / NBRC 15438 / GSS1) protein is Small ribosomal subunit protein eS1.